A 79-amino-acid polypeptide reads, in one-letter code: Small polypeptide DEVIL 8 (79 aa).

Residues 1-12 (MSRLRNSAQLQL) are compositionally biased toward polar residues. The disordered stretch occupies residues 1 to 37 (MSRLRNSAQLQLSKKESLGDNGGALNTTRSSRQKQGK). N-linked (GlcNAc...) asparagine glycosylation is present at N26. The tract at residues 39-70 (GFTRKCGRLVKEQRARFYIMRRCVVMLICWTD) is required for DVL/RTFL small polypeptide activity. Residues 55–71 (FYIMRRCVVMLICWTDH) form a helical membrane-spanning segment. N74 carries an N-linked (GlcNAc...) asparagine glycan.

Belongs to the DVL/RTFL small polypeptides family.

Its subcellular location is the cell membrane. In terms of biological role, small polypeptide acting as a regulatory molecule which coordinates cellular responses required for differentiation, growth and development, probably by restricting polar cell proliferation in lateral organs and coordinating socket cell recruitment and differentiation at trichome sites. This is Small polypeptide DEVIL 8 from Arabidopsis thaliana (Mouse-ear cress).